Reading from the N-terminus, the 331-residue chain is Biotin synthase (331 aa).

The Radical SAM core domain occupies Asn-53 to Arg-272. Residues Cys-68, Cys-72, and Cys-75 each contribute to the [4Fe-4S] cluster site. [2Fe-2S] cluster contacts are provided by Cys-112, Cys-143, Cys-203, and Arg-276.

The protein belongs to the radical SAM superfamily. Biotin synthase family. As to quaternary structure, homodimer. It depends on [4Fe-4S] cluster as a cofactor. The cofactor is [2Fe-2S] cluster.

It catalyses the reaction (4R,5S)-dethiobiotin + (sulfur carrier)-SH + 2 reduced [2Fe-2S]-[ferredoxin] + 2 S-adenosyl-L-methionine = (sulfur carrier)-H + biotin + 2 5'-deoxyadenosine + 2 L-methionine + 2 oxidized [2Fe-2S]-[ferredoxin]. The protein operates within cofactor biosynthesis; biotin biosynthesis; biotin from 7,8-diaminononanoate: step 2/2. In terms of biological role, catalyzes the conversion of dethiobiotin (DTB) to biotin by the insertion of a sulfur atom into dethiobiotin via a radical-based mechanism. The polypeptide is Biotin synthase (Bradyrhizobium diazoefficiens (strain JCM 10833 / BCRC 13528 / IAM 13628 / NBRC 14792 / USDA 110)).